The chain runs to 197 residues: Predicted GPI-anchored protein 34 (197 aa).

The first 20 residues, 1–20, serve as a signal peptide directing secretion; the sequence is MKFTSLICSSILLIIPTVMA. Residues N110, N114, and N152 are each glycosylated (N-linked (GlcNAc...) asparagine). The GPI-anchor amidated glycine moiety is linked to residue G169. Residues 170 to 197 constitute a propeptide, removed in mature form; it reads AAAMAGPVPILTNSIFTAGLLALAAVLL.

The protein localises to the cell membrane. In terms of biological role, predicted GPI-anchored protein which may have a role during host infection. This is Predicted GPI-anchored protein 34 (PGA34) from Candida albicans (strain SC5314 / ATCC MYA-2876) (Yeast).